Here is a 346-residue protein sequence, read N- to C-terminus: Histidinol-phosphate aminotransferase (346 aa).

Residue Lys209 is modified to N6-(pyridoxal phosphate)lysine.

Belongs to the class-II pyridoxal-phosphate-dependent aminotransferase family. Histidinol-phosphate aminotransferase subfamily. As to quaternary structure, homodimer. The cofactor is pyridoxal 5'-phosphate.

It carries out the reaction L-histidinol phosphate + 2-oxoglutarate = 3-(imidazol-4-yl)-2-oxopropyl phosphate + L-glutamate. It functions in the pathway amino-acid biosynthesis; L-histidine biosynthesis; L-histidine from 5-phospho-alpha-D-ribose 1-diphosphate: step 7/9. The polypeptide is Histidinol-phosphate aminotransferase (Aliivibrio fischeri (strain ATCC 700601 / ES114) (Vibrio fischeri)).